Here is a 283-residue protein sequence, read N- to C-terminus: Thymidylate synthase (283 aa).

Arginine 22 serves as a coordination point for dUMP. Cysteine 160 (nucleophile) is an active-site residue. DUMP is bound by residues 180 to 183 (RSCD), asparagine 191, and 221 to 223 (HIY). Aspartate 183 is a (6R)-5,10-methylene-5,6,7,8-tetrahydrofolate binding site. Position 282 (alanine 282) interacts with (6R)-5,10-methylene-5,6,7,8-tetrahydrofolate.

It belongs to the thymidylate synthase family. Bacterial-type ThyA subfamily. In terms of assembly, homodimer.

Its subcellular location is the cytoplasm. It carries out the reaction dUMP + (6R)-5,10-methylene-5,6,7,8-tetrahydrofolate = 7,8-dihydrofolate + dTMP. It participates in pyrimidine metabolism; dTTP biosynthesis. Catalyzes the reductive methylation of 2'-deoxyuridine-5'-monophosphate (dUMP) to 2'-deoxythymidine-5'-monophosphate (dTMP) while utilizing 5,10-methylenetetrahydrofolate (mTHF) as the methyl donor and reductant in the reaction, yielding dihydrofolate (DHF) as a by-product. This enzymatic reaction provides an intracellular de novo source of dTMP, an essential precursor for DNA biosynthesis. This is Thymidylate synthase from Idiomarina loihiensis (strain ATCC BAA-735 / DSM 15497 / L2-TR).